Reading from the N-terminus, the 139-residue chain is Large-conductance mechanosensitive channel (139 aa).

2 helical membrane passes run 19-39 and 81-101; these read VAVIIGAAFGAIVSSMVADVI and GNFLTLTLNFLIVAFVLFMVV.

Belongs to the MscL family. As to quaternary structure, homopentamer.

The protein localises to the cell inner membrane. Channel that opens in response to stretch forces in the membrane lipid bilayer. May participate in the regulation of osmotic pressure changes within the cell. This Nitrobacter hamburgensis (strain DSM 10229 / NCIMB 13809 / X14) protein is Large-conductance mechanosensitive channel.